The sequence spans 192 residues: Acetyltransferase PA3944 (192 aa).

An N-acetyltransferase domain is found at 18-187; that stretch reads LLLRAWRDSD…RHILYRVDAA (170 aa). Residues 105–107, G113, N145, and 150–152 each bind CoA; these read WRL and GLM.

Its function is as follows. Catalyzes the transfer of an acetyl group from acetyl coenzyme A (AcCoA) to an acceptor substrate and releases both CoA and the acetylated product. It prefers the peptide Asp-Phe methyl ester (or aspartame) and the peptide antibiotics polymyxin B and colistin. Other substrates like dopamine, serotonin, puromycin, chloramphenicol, D-glucosamine, glycine and N-alpha-acetyl-L-glutamine are used and displayed lower activity. The chain is Acetyltransferase PA3944 from Pseudomonas aeruginosa (strain ATCC 15692 / DSM 22644 / CIP 104116 / JCM 14847 / LMG 12228 / 1C / PRS 101 / PAO1).